Here is a 407-residue protein sequence, read N- to C-terminus: Aurora kinase (407 aa).

Disordered stretches follow at residues 1–43 (MTPT…STSS) and 66–137 (ERQG…TQSK). 2 stretches are compositionally biased toward low complexity: residues 31–43 (SAST…STSS) and 126–136 (STTTTMTSTQS). In terms of domain architecture, Protein kinase spans 147–399 (FDIGRPLGKG…LEGVIAHAWI (253 aa)). ATP is bound by residues lysine 157, lysine 176, and 224–227 (LEYA). Aspartate 272 serves as the catalytic Proton acceptor. Position 290 (aspartate 290) interacts with ATP.

The protein belongs to the protein kinase superfamily. Ser/Thr protein kinase family.

The protein localises to the cytoplasm. It localises to the cytoskeleton. It is found in the spindle. The protein resides in the midbody. Its subcellular location is the microtubule organizing center. The protein localises to the centrosome. It localises to the nucleus. It is found in the chromosome. The protein resides in the centromere. The catalysed reaction is L-seryl-[protein] + ATP = O-phospho-L-seryl-[protein] + ADP + H(+). It catalyses the reaction L-threonyl-[protein] + ATP = O-phospho-L-threonyl-[protein] + ADP + H(+). Its activity is regulated as follows. Cdc2 activity is required for activation. Functionally, serine/threonine protein kinase that contributes to the regulation of cell cycle progression. Involved in meiotic apparatus formation and polar body extrusion. Contributes to Plk1 activation and phosphorylation of histone H3 at 'Ser-10' during meiosis I. Required for accurate progression of early embryonic M phase. Involved in chromosome alignment and cleavage furrow formation during early embryonic cycles. May be involved in mitotic spindle formation and cytokinesis. In Patiria pectinifera (Starfish), this protein is Aurora kinase.